A 236-amino-acid chain; its full sequence is Small ribosomal subunit protein uS3 (236 aa).

Residues 39–112 (IREFITKHPK…RINLKVEEVG (74 aa)) form the KH type-2 domain. The interval 212-236 (YGDDNDGADAQTGQASKKPKRSYKR) is disordered.

This sequence belongs to the universal ribosomal protein uS3 family. As to quaternary structure, part of the 30S ribosomal subunit. Forms a tight complex with proteins S10 and S14.

Its function is as follows. Binds the lower part of the 30S subunit head. Binds mRNA in the 70S ribosome, positioning it for translation. The polypeptide is Small ribosomal subunit protein uS3 (Rhodopirellula baltica (strain DSM 10527 / NCIMB 13988 / SH1)).